A 227-amino-acid chain; its full sequence is PKHD-type hydroxylase Mnod_1077 (227 aa).

Residues 78–178 (RVLPPLFNRY…RWSAFFWSQS (101 aa)) enclose the Fe2OG dioxygenase domain. 3 residues coordinate Fe cation: histidine 96, aspartate 98, and histidine 159. Arginine 169 is a binding site for 2-oxoglutarate.

Fe(2+) is required as a cofactor. It depends on L-ascorbate as a cofactor.

This Methylobacterium nodulans (strain LMG 21967 / CNCM I-2342 / ORS 2060) protein is PKHD-type hydroxylase Mnod_1077.